The chain runs to 364 residues: Doublecortin domain-containing protein 2C (364 aa).

Doublecortin domains are found at residues 16–98 (KTIV…LDYI) and 136–217 (RHIN…FPYW). The segment at 233–255 (VEKNSQRKKKVDSKGKEPCKYDG) is disordered.

Expressed in testis and spermatozoa (at protein level).

The protein resides in the cell projection. It localises to the cilium. It is found in the flagellum. The protein localises to the cytoplasm. The polypeptide is Doublecortin domain-containing protein 2C (Homo sapiens (Human)).